A 631-amino-acid chain; its full sequence is 1-deoxy-D-xylulose-5-phosphate synthase (631 aa).

Thiamine diphosphate-binding positions include H87 and G128–S130. D159 contacts Mg(2+). Thiamine diphosphate-binding positions include G160–A161, N188, F295, and E377. N188 contacts Mg(2+).

It belongs to the transketolase family. DXPS subfamily. As to quaternary structure, homodimer. Mg(2+) serves as cofactor. Requires thiamine diphosphate as cofactor.

It catalyses the reaction D-glyceraldehyde 3-phosphate + pyruvate + H(+) = 1-deoxy-D-xylulose 5-phosphate + CO2. Its pathway is metabolic intermediate biosynthesis; 1-deoxy-D-xylulose 5-phosphate biosynthesis; 1-deoxy-D-xylulose 5-phosphate from D-glyceraldehyde 3-phosphate and pyruvate: step 1/1. Functionally, catalyzes the acyloin condensation reaction between C atoms 2 and 3 of pyruvate and glyceraldehyde 3-phosphate to yield 1-deoxy-D-xylulose-5-phosphate (DXP). The protein is 1-deoxy-D-xylulose-5-phosphate synthase of Pseudomonas putida (strain ATCC 700007 / DSM 6899 / JCM 31910 / BCRC 17059 / LMG 24140 / F1).